Reading from the N-terminus, the 238-residue chain is Orotidine 5'-phosphate decarboxylase (238 aa).

Residues aspartate 10, lysine 32, 59–68 (DLKLHDIPNT), threonine 122, arginine 184, glutamine 193, glycine 213, and arginine 214 each bind substrate. Lysine 61 functions as the Proton donor in the catalytic mechanism.

Belongs to the OMP decarboxylase family. Type 1 subfamily. As to quaternary structure, homodimer.

It carries out the reaction orotidine 5'-phosphate + H(+) = UMP + CO2. Its pathway is pyrimidine metabolism; UMP biosynthesis via de novo pathway; UMP from orotate: step 2/2. In terms of biological role, catalyzes the decarboxylation of orotidine 5'-monophosphate (OMP) to uridine 5'-monophosphate (UMP). This chain is Orotidine 5'-phosphate decarboxylase, found in Bacillus thuringiensis subsp. konkukian (strain 97-27).